Consider the following 496-residue polypeptide: NAD(P)H-quinone oxidoreductase subunit 2, chloroplastic (496 aa).

Transmembrane regions (helical) follow at residues 14–34 (SFLP…LDLV), 42–62 (MLVK…IQQW), 79–99 (FTTC…PLSF), 109–129 (LTEF…LSSA), 133–153 (ITIF…TGYV), 167–187 (LIIG…LYGL), 210–230 (LASW…LSLV), 244–264 (PTPV…ALTI), 281–301 (ILQI…MVET), 305–325 (RILT…IVAG), 334–354 (LVYM…IILF), 377–397 (ASCL…TGFF), 400–420 (ILLF…TGIF), and 469–489 (IYLC…VIYF).

This sequence belongs to the complex I subunit 2 family. NDH is composed of at least 16 different subunits, 5 of which are encoded in the nucleus.

Its subcellular location is the plastid. It is found in the chloroplast thylakoid membrane. It catalyses the reaction a plastoquinone + NADH + (n+1) H(+)(in) = a plastoquinol + NAD(+) + n H(+)(out). The enzyme catalyses a plastoquinone + NADPH + (n+1) H(+)(in) = a plastoquinol + NADP(+) + n H(+)(out). Its function is as follows. NDH shuttles electrons from NAD(P)H:plastoquinone, via FMN and iron-sulfur (Fe-S) centers, to quinones in the photosynthetic chain and possibly in a chloroplast respiratory chain. The immediate electron acceptor for the enzyme in this species is believed to be plastoquinone. Couples the redox reaction to proton translocation, and thus conserves the redox energy in a proton gradient. This is NAD(P)H-quinone oxidoreductase subunit 2, chloroplastic from Chara vulgaris (Common stonewort).